Consider the following 130-residue polypeptide: uncharacterized protein (130 aa).

This is an uncharacterized protein from Enterobacteria phage T4 (Bacteriophage T4).